The primary structure comprises 265 residues: Regulator of calcineurin 2 (265 aa).

Phosphoserine is present on residues serine 104 and serine 110. 2 disordered regions span residues 127 to 213 (LLSI…DKSA) and 242 to 265 (ENDVNATASNPPKSPSITVNEFFH). The residue at position 132 (threonine 132) is a Phosphothreonine. Composition is skewed to low complexity over residues 141–161 (SSSLNKGGSSLSPDKSSLESP) and 182–202 (LSRSSSSTSNLSLNRSSQTSL). Serine 152, serine 157, serine 160, serine 183, serine 187, serine 193, serine 201, and serine 255 each carry phosphoserine.

In terms of processing, phosphorylation of Ser-152 and Ser-160 is induced 2-fold in response to mating pheromone.

It is found in the cytoplasm. This is Regulator of calcineurin 2 (RCN2) from Saccharomyces cerevisiae (strain ATCC 204508 / S288c) (Baker's yeast).